The chain runs to 209 residues: Ubiquitin-conjugating enzyme E2 S (209 aa).

The UBC core domain occupies 14-160 (QTIRQVMREL…ARMMTEIHAQ (147 aa)). Cys98 (glycyl thioester intermediate) is an active-site residue. Positions 165–194 (GVGAASDAKDDDGPSTKKHAGLDKKLQDKK) are disordered. Residues 171–194 (DAKDDDGPSTKKHAGLDKKLQDKK) show a composition bias toward basic and acidic residues.

This sequence belongs to the ubiquitin-conjugating enzyme family.

It carries out the reaction S-ubiquitinyl-[E1 ubiquitin-activating enzyme]-L-cysteine + [E2 ubiquitin-conjugating enzyme]-L-cysteine = [E1 ubiquitin-activating enzyme]-L-cysteine + S-ubiquitinyl-[E2 ubiquitin-conjugating enzyme]-L-cysteine.. It functions in the pathway protein modification; protein ubiquitination. Catalyzes the covalent attachment of ubiquitin to other proteins. Acts as an essential factor of the anaphase promoting complex/cyclosome (APC/C), a cell cycle-regulated ubiquitin ligase that controls progression through mitosis. Acts by specifically elongating polyubiquitin chains initiated by the E2 enzyme vih/UbcH10 on APC/C substrates, enhancing the degradation of APC/C substrates by the proteasome and promoting mitotic exit. In Drosophila persimilis (Fruit fly), this protein is Ubiquitin-conjugating enzyme E2 S.